The chain runs to 142 residues: Large ribosomal subunit protein uL11 (142 aa).

The protein belongs to the universal ribosomal protein uL11 family. Part of the ribosomal stalk of the 50S ribosomal subunit. Interacts with L10 and the large rRNA to form the base of the stalk. L10 forms an elongated spine to which L12 dimers bind in a sequential fashion forming a multimeric L10(L12)X complex. Post-translationally, one or more lysine residues are methylated.

Functionally, forms part of the ribosomal stalk which helps the ribosome interact with GTP-bound translation factors. The protein is Large ribosomal subunit protein uL11 of Pelotomaculum thermopropionicum (strain DSM 13744 / JCM 10971 / SI).